The primary structure comprises 478 residues: Protein nucleotidyltransferase YdiU (478 aa).

Residues G84, G86, R87, K107, D119, G120, R170, and R177 each contribute to the ATP site. Residue D246 is the Proton acceptor of the active site. Residues N247 and D256 each contribute to the Mg(2+) site. D256 contributes to the ATP binding site.

The protein belongs to the SELO family. It depends on Mg(2+) as a cofactor. Mn(2+) serves as cofactor.

The enzyme catalyses L-seryl-[protein] + ATP = 3-O-(5'-adenylyl)-L-seryl-[protein] + diphosphate. The catalysed reaction is L-threonyl-[protein] + ATP = 3-O-(5'-adenylyl)-L-threonyl-[protein] + diphosphate. It carries out the reaction L-tyrosyl-[protein] + ATP = O-(5'-adenylyl)-L-tyrosyl-[protein] + diphosphate. It catalyses the reaction L-histidyl-[protein] + UTP = N(tele)-(5'-uridylyl)-L-histidyl-[protein] + diphosphate. The enzyme catalyses L-seryl-[protein] + UTP = O-(5'-uridylyl)-L-seryl-[protein] + diphosphate. The catalysed reaction is L-tyrosyl-[protein] + UTP = O-(5'-uridylyl)-L-tyrosyl-[protein] + diphosphate. Functionally, nucleotidyltransferase involved in the post-translational modification of proteins. It can catalyze the addition of adenosine monophosphate (AMP) or uridine monophosphate (UMP) to a protein, resulting in modifications known as AMPylation and UMPylation. The polypeptide is Protein nucleotidyltransferase YdiU (Escherichia coli O17:K52:H18 (strain UMN026 / ExPEC)).